The sequence spans 146 residues: uncharacterized protein (146 aa).

The chain crosses the membrane as a helical span at residues 7-27 (FVLSITIVLVILIIIAFIWYN).

The protein belongs to the asfivirus E146L family.

The protein localises to the host membrane. The protein resides in the virion. This is an uncharacterized protein from Ornithodoros (relapsing fever ticks).